We begin with the raw amino-acid sequence, 400 residues long: PHD finger protein 24 (400 aa).

G2 carries N-myristoyl glycine lipidation. The span at 29–38 (RDRPSIRRGG) shows a compositional bias: basic and acidic residues. Residues 29–65 (RDRPSIRRGGELPGSRRGTVEGSVQEVQEEKEAEASA) are disordered. Position 36 is an omega-N-methylarginine (R36). A Phosphoserine modification is found at S43. T47 is modified (phosphothreonine). S51 is modified (phosphoserine). The segment at 129-190 (NDEMCDVCEV…TGWSCYYCDN (62 aa)) adopts a PHD-type zinc-finger fold. R307 bears the Omega-N-methylarginine mark.

The protein is PHD finger protein 24 of Mus musculus (Mouse).